An 854-amino-acid chain; its full sequence is Putative COX1/OXI3 intron 2 protein (854 aa).

The 285-residue stretch at 329 to 613 folds into the Reverse transcriptase domain; the sequence is LSKDINTNMF…EGVSFLGYDV (285 aa).

The protein resides in the mitochondrion. The protein is Putative COX1/OXI3 intron 2 protein (AI2) of Saccharomyces cerevisiae (strain ATCC 204508 / S288c) (Baker's yeast).